The primary structure comprises 218 residues: Thymidylate kinase (218 aa).

Position 15–22 (15–22 (GLDRSGKS)) interacts with ATP.

Belongs to the thymidylate kinase family.

The catalysed reaction is dTMP + ATP = dTDP + ADP. Its pathway is pyrimidine metabolism; dTTP biosynthesis. Its function is as follows. Catalyzes the conversion of dTMP to dTDP. The polypeptide is Thymidylate kinase (Caenorhabditis elegans).